The primary structure comprises 207 residues: MLNKLSLLLKDAGISLTDHQKNQLIAYVNMLHKWNKAYNLTSVRDPNEMLVRHILDSIVVAPYLQGERFIDVGSGPGLPGIPLSIVRPEAHFTLLDSLGKRVRFLRQVQHELKLENIEPVQSRVEEFPSEPPFDGVISRAFASLNDMVSWCHHLPGEQGRFYALKGQMPEDEIALLPEEYQVESVVKLQVPALDGERHLVVIKANKI.

S-adenosyl-L-methionine contacts are provided by residues Gly73, Leu78, 124–125, and Arg139; that span reads VE.

Belongs to the methyltransferase superfamily. RNA methyltransferase RsmG family.

The protein resides in the cytoplasm. It carries out the reaction guanosine(527) in 16S rRNA + S-adenosyl-L-methionine = N(7)-methylguanosine(527) in 16S rRNA + S-adenosyl-L-homocysteine. Functionally, specifically methylates the N7 position of guanine in position 527 of 16S rRNA. This Shigella flexneri protein is Ribosomal RNA small subunit methyltransferase G.